The chain runs to 359 residues: tRNA-specific 2-thiouridylase MnmA (359 aa).

ATP is bound by residues 9 to 16 (GISGGVDS) and methionine 35. The interval 95 to 97 (NPD) is interaction with target base in tRNA. Cysteine 100 serves as the catalytic Nucleophile. Cysteine 100 and cysteine 197 form a disulfide bridge. An ATP-binding site is contributed by glycine 124. The interval 147–149 (KDQ) is interaction with tRNA. Cysteine 197 acts as the Cysteine persulfide intermediate in catalysis. The tract at residues 309 to 310 (RY) is interaction with tRNA.

Belongs to the MnmA/TRMU family.

It is found in the cytoplasm. The catalysed reaction is S-sulfanyl-L-cysteinyl-[protein] + uridine(34) in tRNA + AH2 + ATP = 2-thiouridine(34) in tRNA + L-cysteinyl-[protein] + A + AMP + diphosphate + H(+). Its function is as follows. Catalyzes the 2-thiolation of uridine at the wobble position (U34) of tRNA, leading to the formation of s(2)U34. The sequence is that of tRNA-specific 2-thiouridylase MnmA from Francisella tularensis subsp. novicida (strain U112).